The chain runs to 386 residues: 5-hydroxytryptamine receptor 1B (386 aa).

Over 1 to 42 (MEEQGIQCAPPPPAASQTGVPLTNLSHNCSADGYIYQDSIAL) the chain is Extracellular. Residues asparagine 24 and asparagine 28 are each glycosylated (N-linked (GlcNAc...) asparagine). Residues 43–68 (PWKVLLVALLALITLATTLSNAFVIA) traverse the membrane as a helical segment. Residues 69-82 (TVYRTRKLHTPANY) are Cytoplasmic-facing. The helical transmembrane segment at 83–107 (LIASLAVTDLLVSILVMPISTMYTV) threads the bilayer. Topologically, residues 108-115 (TGRWTLGQ) are extracellular. The helical transmembrane segment at 116 to 141 (VVCDFWLSSDITCCTASIMHLCVIAL) threads the bilayer. Cysteine 118 and cysteine 195 form a disulfide bridge. Ergotamine contacts are provided by aspartate 125 and threonine 130. The DRY motif; important for ligand-induced conformation changes and signaling motif lies at 142–144 (DRY). Topologically, residues 142-161 (DRYWAITDAVEYSAKRTPKR) are cytoplasmic. Residues 162–180 (AAIMIVLVWVFSISISLPP) form a helical membrane-spanning segment. Residues 181–201 (FFWRQAKAEEEMLDCFVNTDH) are Extracellular-facing. Valine 197 contributes to the ergotamine binding site. A helical membrane pass occupies residues 202–225 (VLYTVYSTVGAFYLPTLLLIALYG). Over 226 to 311 (RIYVEARSRI…AARERKATKT (86 aa)) the chain is Cytoplasmic. Polar residues predominate over residues 255–268 (DSPGSTSSVTSINS). The tract at residues 255–278 (DSPGSTSSVTSINSRAPDVPSESG) is disordered. A helical membrane pass occupies residues 312–333 (LGIILGAFIVCWLPFFIISLVM). Over 334 to 343 (PICKDACWFH) the chain is Extracellular. Residues 344–366 (MAIFDFFNWLGYLNSLINPIIYT) form a helical membrane-spanning segment. The NPxxY motif; important for ligand-induced conformation changes and signaling motif lies at 361-365 (NPIIY). Topologically, residues 367-386 (MSNEDFKQAFHKLIRFKCAG) are cytoplasmic. Residue cysteine 384 is the site of S-palmitoyl cysteine attachment.

It belongs to the G-protein coupled receptor 1 family. Homodimer. Heterodimer with HTR1D. Phosphorylated. Desensitization of the receptor may be mediated by its phosphorylation. In terms of processing, palmitoylated. In terms of tissue distribution, predominantly expressed in striatum and Purkinje cells.

Its subcellular location is the cell membrane. G-protein coupled receptor for 5-hydroxytryptamine (serotonin). Also functions as a receptor for ergot alkaloid derivatives, various anxiolytic and antidepressant drugs and other psychoactive substances, such as lysergic acid diethylamide (LSD). Ligand binding causes a conformation change that triggers signaling via guanine nucleotide-binding proteins (G proteins) and modulates the activity of downstream effectors, such as adenylate cyclase. HTR1B is coupled to G(i)/G(o) G alpha proteins and mediates inhibitory neurotransmission by inhibiting adenylate cyclase activity. Arrestin family members inhibit signaling via G proteins and mediate activation of alternative signaling pathways. Regulates the release of 5-hydroxytryptamine, dopamine and acetylcholine in the brain, and thereby affects neural activity, nociceptive processing, pain perception, mood and behavior. Besides, plays a role in vasoconstriction of cerebral arteries. This is 5-hydroxytryptamine receptor 1B (Htr1b) from Mus musculus (Mouse).